The primary structure comprises 187 residues: Ponticulin-like protein K (187 aa).

The signal sequence occupies residues 1–19 (MKNLILLFLLISIINLIQS). Asn-31, Asn-70, Asn-86, Asn-93, Asn-119, Asn-128, Asn-146, Asn-160, and Asn-161 each carry an N-linked (GlcNAc...) asparagine glycan. Positions 115–146 (PSPSNSSNPSPSPNTTSSSSLSSSSLNSNEPN) are enriched in low complexity. The tract at residues 115 to 161 (PSPSNSSNPSPSPNTTSSSSLSSSSLNSNEPNQTTKPPKTNEPQKNN) is disordered. Positions 147-161 (QTTKPPKTNEPQKNN) are enriched in polar residues. Asn-161 carries GPI-like-anchor amidated asparagine lipidation. Residues 162 to 187 (STSNIPNFFAIFGFLVLIIFILGDKI) constitute a propeptide, removed in mature form.

Belongs to the ponticulin family. Post-translationally, the GPI-like-anchor contains a phosphoceramide group, rather than a phosphatidyl group.

It is found in the cell membrane. Binds F-actin and nucleates actin assembly. This Dictyostelium discoideum (Social amoeba) protein is Ponticulin-like protein K (ponK).